A 179-amino-acid polypeptide reads, in one-letter code: Large ribosomal subunit protein uL5 (179 aa).

The protein belongs to the universal ribosomal protein uL5 family. Part of the 50S ribosomal subunit; part of the 5S rRNA/L5/L18/L25 subcomplex. Contacts the 5S rRNA and the P site tRNA. Forms a bridge to the 30S subunit in the 70S ribosome.

Functionally, this is one of the proteins that bind and probably mediate the attachment of the 5S RNA into the large ribosomal subunit, where it forms part of the central protuberance. In the 70S ribosome it contacts protein S13 of the 30S subunit (bridge B1b), connecting the 2 subunits; this bridge is implicated in subunit movement. Contacts the P site tRNA; the 5S rRNA and some of its associated proteins might help stabilize positioning of ribosome-bound tRNAs. This is Large ribosomal subunit protein uL5 from Parasynechococcus marenigrum (strain WH8102).